The sequence spans 493 residues: MSELTALTIAEARDKLKAKAITATELTDAYLSAIDAANDAINAYVAVTHDQARSMAKASDERIAKGEAGALEGIPLGVKDLFATKGVHTQACSHILDGFKPEYESTVTANLWADGAVMLGKLNMDEFAMGSSNETSYYGPVKNPWRAKGSNADLVPGGSSGGSAAAVAAHLCAGATATDTGGSIRQPAAFTGTVGIKPTYGRVSRWGTVAFASSLDQAGPIARDVRDAAILMKSMASLDLKDTTSVDLPVPDYEAALGRSVKGMKIGIPREYRVDGMPGEIEELWQKGIQYLKDAGAEIVDISLPHTKYALPAYYIVAPAEASSNLARYDGVRYGLRVPGKDIADMYEQTRAAGFGKEAKRRIMIGTYVLSAGYYDAYYLRAQKVRTLIKKDFEDVFAKGVDAILTPATPSAAFGLADEVLANDPVKMYLNDIFTVTVNMAGLPGIAVPAGLNGQGLPLGLQLIGRPFEEETLFQAAHVIEQAAGRFTPAKWW.

Catalysis depends on charge relay system residues Lys79 and Ser159. Residue Ser183 is the Acyl-ester intermediate of the active site.

The protein belongs to the amidase family. GatA subfamily. As to quaternary structure, heterotrimer of A, B and C subunits.

The catalysed reaction is L-glutamyl-tRNA(Gln) + L-glutamine + ATP + H2O = L-glutaminyl-tRNA(Gln) + L-glutamate + ADP + phosphate + H(+). Functionally, allows the formation of correctly charged Gln-tRNA(Gln) through the transamidation of misacylated Glu-tRNA(Gln) in organisms which lack glutaminyl-tRNA synthetase. The reaction takes place in the presence of glutamine and ATP through an activated gamma-phospho-Glu-tRNA(Gln). In Brucella ovis (strain ATCC 25840 / 63/290 / NCTC 10512), this protein is Glutamyl-tRNA(Gln) amidotransferase subunit A.